Here is an 882-residue protein sequence, read N- to C-terminus: DNA mismatch repair protein MutS (882 aa).

656–663 (GPNASGKS) serves as a coordination point for ATP.

It belongs to the DNA mismatch repair MutS family.

This protein is involved in the repair of mismatches in DNA. It is possible that it carries out the mismatch recognition step. This protein has a weak ATPase activity. The sequence is that of DNA mismatch repair protein MutS from Synechococcus elongatus (strain ATCC 33912 / PCC 7942 / FACHB-805) (Anacystis nidulans R2).